We begin with the raw amino-acid sequence, 107 residues long: Replication restart protein PriB (107 aa).

Residues 1-97 (MNTLELSARV…LHLQQARRIA (97 aa)) enclose the SSB domain.

Belongs to the PriB family. Homodimer. Interacts with PriA and DnaT. Component of the replication restart primosome. Primosome assembly occurs via a 'hand-off' mechanism. PriA binds to replication forks, subsequently PriB then DnaT bind; DnaT then displaces ssDNA to generate the helicase loading substrate.

Its function is as follows. Involved in the restart of stalled replication forks, which reloads the replicative helicase on sites other than the origin of replication; the PriA-PriB pathway is the major replication restart pathway. During primosome assembly it facilitates complex formation between PriA and DnaT on DNA; stabilizes PriA on DNA. Stimulates the DNA unwinding activity of PriA helicase. This Bordetella parapertussis (strain 12822 / ATCC BAA-587 / NCTC 13253) protein is Replication restart protein PriB.